We begin with the raw amino-acid sequence, 38 residues long: SDRCKDLGISIDEENNRRLVVKDGDPLAVRFVKANRRG.

It belongs to the protease inhibitor I3 (leguminous Kunitz-type inhibitor) family. Heterodimer of an alpha and a beta chain linked by a disulfide bond.

Its function is as follows. Inhibition of trypsin. In Neltuma juliflora (Mesquite), this protein is Kunitz-type trypsin inhibitor beta chain.